Reading from the N-terminus, the 68-residue chain is SERF-like protein YDL085C-A (68 aa).

Composition is skewed to basic and acidic residues over residues 1–43 (MARG…EILR) and 50–68 (DARREAEKLEKLKAEKTRR). A disordered region spans residues 1–68 (MARGNQRDLA…EKLKAEKTRR (68 aa)). Ser-37 bears the Phosphoserine mark.

It belongs to the SERF family.

Its subcellular location is the cytoplasm. The protein localises to the nucleus. In Saccharomyces cerevisiae (strain ATCC 204508 / S288c) (Baker's yeast), this protein is SERF-like protein YDL085C-A.